A 99-amino-acid chain; its full sequence is NADH-quinone oxidoreductase subunit K (99 aa).

3 helical membrane passes run 2–22, 28–48, and 60–80; these read PVEYYLWLASILFGIGLLGVL, LILMMSVELMLNAANLTFLAF, and IAFFVIAVAAAEAAVGLAVVI.

Belongs to the complex I subunit 4L family. NDH-1 is composed of 14 different subunits. Subunits NuoA, H, J, K, L, M, N constitute the membrane sector of the complex.

The protein localises to the cell inner membrane. It carries out the reaction a quinone + NADH + 5 H(+)(in) = a quinol + NAD(+) + 4 H(+)(out). NDH-1 shuttles electrons from NADH, via FMN and iron-sulfur (Fe-S) centers, to quinones in the respiratory chain. The immediate electron acceptor for the enzyme in this species is believed to be ubiquinone. Couples the redox reaction to proton translocation (for every two electrons transferred, four hydrogen ions are translocated across the cytoplasmic membrane), and thus conserves the redox energy in a proton gradient. In Anaeromyxobacter dehalogenans (strain 2CP-C), this protein is NADH-quinone oxidoreductase subunit K.